The primary structure comprises 373 residues: Cobalt-precorrin-5B C(1)-methyltransferase (373 aa).

This sequence belongs to the CbiD family.

The catalysed reaction is Co-precorrin-5B + S-adenosyl-L-methionine = Co-precorrin-6A + S-adenosyl-L-homocysteine. Its pathway is cofactor biosynthesis; adenosylcobalamin biosynthesis; cob(II)yrinate a,c-diamide from sirohydrochlorin (anaerobic route): step 6/10. In terms of biological role, catalyzes the methylation of C-1 in cobalt-precorrin-5B to form cobalt-precorrin-6A. The polypeptide is Cobalt-precorrin-5B C(1)-methyltransferase (Halorhodospira halophila (strain DSM 244 / SL1) (Ectothiorhodospira halophila (strain DSM 244 / SL1))).